The chain runs to 424 residues: Probable threonylcarbamoyladenosine tRNA methylthiotransferase (424 aa).

The region spanning 4–115 (IRVYIETFGC…APQAVRAASN (112 aa)) is the MTTase N-terminal domain. [4Fe-4S] cluster is bound by residues Cys13, Cys48, Cys79, Cys150, Cys154, and Cys157. A Radical SAM core domain is found at 136–365 (RSNPLIHIIP…EELKMRITEE (230 aa)). One can recognise a TRAM domain in the interval 368-424 (RRLVGSFQEILVVERGRKGGFIGRTGSYIPVVTETGEPGSFRRVRIRDATGTYLLAD).

Belongs to the methylthiotransferase family. CDKAL1 subfamily. [4Fe-4S] cluster is required as a cofactor.

It carries out the reaction N(6)-L-threonylcarbamoyladenosine(37) in tRNA + (sulfur carrier)-SH + AH2 + 2 S-adenosyl-L-methionine = 2-methylsulfanyl-N(6)-L-threonylcarbamoyladenosine(37) in tRNA + (sulfur carrier)-H + 5'-deoxyadenosine + L-methionine + A + S-adenosyl-L-homocysteine + 2 H(+). In terms of biological role, catalyzes the methylthiolation of N6-threonylcarbamoyladenosine (t(6)A), leading to the formation of 2-methylthio-N6-threonylcarbamoyladenosine (ms(2)t(6)A) at position 37 in tRNAs that read codons beginning with adenine. The polypeptide is Probable threonylcarbamoyladenosine tRNA methylthiotransferase (Methanothermobacter thermautotrophicus (strain ATCC 29096 / DSM 1053 / JCM 10044 / NBRC 100330 / Delta H) (Methanobacterium thermoautotrophicum)).